The following is a 70-amino-acid chain: MGFLITTLIFVVVGIIASLCVRICCNRGPSTNLLHLTLVITATVCCWMMWAIVYIAQMNPLIVPILSETE.

2 helical membrane passes run 1-21 and 36-56; these read MGFL…SLCV and LTLV…VYIA.

This sequence belongs to the V-ATPase e1/e2 subunit family. As to quaternary structure, V-ATPase is a heteromultimeric enzyme composed of a peripheral catalytic V1 complex (components A to H) attached to an integral membrane V0 proton pore complex (components: a, c, c'', d and e).

It localises to the golgi apparatus. Its subcellular location is the trans-Golgi network membrane. Subunit of the integral membrane V0 complex of vacuolar ATPase. V-ATPase is responsible for acidifying a variety of intracellular compartments in eukaryotic cells. This Arabidopsis thaliana (Mouse-ear cress) protein is V-type proton ATPase subunit e1 (VHA-e1).